The sequence spans 161 residues: MPSFDITSEVDEPSLRNSVDVANSKIAGRHDFKGTSANVELKEKLMTLYGDSDFQLDQMKAILLPEMTKKKVDVRCLEYGDVQKVSGNKVKQEVKVRVGVDQDLAKKIVKLLKDSKLKVQAAIQGDAVRVSGAKRDVLQEAIALVKKQITDFPLQFGNFRD.

It belongs to the YajQ family.

Nucleotide-binding protein. The sequence is that of Nucleotide-binding protein azo2183 from Azoarcus sp. (strain BH72).